A 610-amino-acid polypeptide reads, in one-letter code: MLFARRLEQLKDLNRIRNFSIIAHIDHGKSTLADRFIQICGGLTEREMSSQVLDSMDIERERGITIKAQCVSLNYTAKDGKTYLLNFIDTPGHVDFSYEVSRSLAACEGAILVVDAAQGVEAQTLAVCYTAIDQSLTVLPVLNKIDLPQAEPERVISEIEDIIGLDAQDAIRVSAKSGLGVNDVLEALVANIPPPKGDVHAPLQALIIDSWFDSYLGVVSLVRIVNGAIRKGDKMRVMSTGRAYEVDQVGIFTPKRTKLDALYAGEVGYVVAGIKEIQGAPVGDTLTLDRNPADKVLPGFQRVKPQVYAGLFPVSSDDFEAFREALAKLSLNDASLFYEPESSEALGFGFRCGFLGMLHMEIIQERLEREYNLDLISTAPTVVYQIVTQKGETLLIDNPSHLPPTPQIKEMYEPIVRANILVPQDYLGPIITLCVERRGVQVSMTYSGRHVSVVYDIPMSEVVSDFFDRLKSVSRGYASLDYNFQRFQIADLVKMDILINSERVDALAVIVHRDSAHSRGKLIAEKMQQLIPRQMFDVAIQAAIGSHIIARQTVKALRKNVTAKCYGGDVTRKRKLLEKQKAGKKRMKQVGHVEIPQEAFMAVFQTDKKK.

The tr-type G domain maps to 14 to 196 (NRIRNFSIIA…ALVANIPPPK (183 aa)). GTP is bound by residues 26–31 (DHGKST) and 143–146 (NKID).

Belongs to the TRAFAC class translation factor GTPase superfamily. Classic translation factor GTPase family. LepA subfamily.

It localises to the cell inner membrane. It catalyses the reaction GTP + H2O = GDP + phosphate + H(+). Required for accurate and efficient protein synthesis under certain stress conditions. May act as a fidelity factor of the translation reaction, by catalyzing a one-codon backward translocation of tRNAs on improperly translocated ribosomes. Back-translocation proceeds from a post-translocation (POST) complex to a pre-translocation (PRE) complex, thus giving elongation factor G a second chance to translocate the tRNAs correctly. Binds to ribosomes in a GTP-dependent manner. This is Elongation factor 4 from Legionella pneumophila (strain Paris).